The chain runs to 123 residues: UPF0295 protein Bcer98_0460 (123 aa).

The next 2 helical transmembrane spans lie at 12–32 (IRTFALSLVFIGLLIAYLGVF) and 43–63 (FMMLGFLAVLASTFVYFWIGM).

The protein belongs to the UPF0295 family.

It is found in the cell membrane. This Bacillus cytotoxicus (strain DSM 22905 / CIP 110041 / 391-98 / NVH 391-98) protein is UPF0295 protein Bcer98_0460.